A 288-amino-acid polypeptide reads, in one-letter code: Protease HtpX (288 aa).

A run of 2 helical transmembrane segments spans residues 4-24 and 36-56; these read VMLF…VLNI and LSGL…ISLM. His-143 is a Zn(2+) binding site. Glu-144 is a catalytic residue. His-147 is a Zn(2+) binding site. Helical transmembrane passes span 151 to 171 and 193 to 213; these read GDMV…IFLS and MVYF…ASFI. Glu-222 serves as a coordination point for Zn(2+).

This sequence belongs to the peptidase M48B family. It depends on Zn(2+) as a cofactor.

It is found in the cell inner membrane. The protein is Protease HtpX of Vibrio vulnificus (strain YJ016).